The sequence spans 279 residues: Esterase CG5412 (279 aa).

Catalysis depends on charge relay system residues serine 133, aspartate 191, and histidine 218. Positions 249-279 (QSGNASFVDSGAEDDNDAEVAAMTAELDESD) are disordered.

Belongs to the LovG family.

This Drosophila melanogaster (Fruit fly) protein is Esterase CG5412.